The chain runs to 187 residues: Large ribosomal subunit protein bL25 (187 aa).

It belongs to the bacterial ribosomal protein bL25 family. CTC subfamily. In terms of assembly, part of the 50S ribosomal subunit; part of the 5S rRNA/L5/L18/L25 subcomplex. Contacts the 5S rRNA. Binds to the 5S rRNA independently of L5 and L18.

This is one of the proteins that binds to the 5S RNA in the ribosome where it forms part of the central protuberance. The sequence is that of Large ribosomal subunit protein bL25 from Tropheryma whipplei (strain Twist) (Whipple's bacillus).